The primary structure comprises 129 residues: Histone H2B.2 (129 aa).

A compositionally biased stretch (basic and acidic residues) spans 1–19; the sequence is MAPKAEKKPASKAPAEKKP. The tract at residues 1–37 is disordered; that stretch reads MAPKAEKKPASKAPAEKKPAAKKTASSDSKKRTKTRK. N6-acetyllysine; alternate occurs at positions 7 and 8. Glycyl lysine isopeptide (Lys-Gly) (interchain with G-Cter in SUMO); alternate cross-links involve residues Lys-7 and Lys-8. Position 11 is a phosphoserine (Ser-11). Lys-12 is modified (N6-acetyllysine). Lys-17 is modified (N6-acetyllysine; alternate). Lys-17 participates in a covalent cross-link: Glycyl lysine isopeptide (Lys-Gly) (interchain with G-Cter in SUMO); alternate. Residue Lys-18 forms a Glycyl lysine isopeptide (Lys-Gly) (interchain with G-Cter in SUMO) linkage. Lys-123 participates in a covalent cross-link: Glycyl lysine isopeptide (Lys-Gly) (interchain with G-Cter in ubiquitin).

Belongs to the histone H2B family. In terms of assembly, the nucleosome is a histone octamer containing two molecules each of H2A, H2B, H3 and H4 assembled in one H3-H4 heterotetramer and two H2A-H2B heterodimers. The octamer wraps approximately 147 bp of DNA. Post-translationally, monoubiquitinated by the UBC2-BRE1 complex to form H2BK123ub1. H2BK123ub1 gives a specific tag for epigenetic transcriptional activation and is also prerequisite for H3K4me and H3K79me formation. H2BK123ub1 also modulates the formation of double-strand breaks during meiosis and is a prerequisite for DNA-damage checkpoint activation. In terms of processing, phosphorylated by STE20 to form H2BS10ph during progression through meiotic prophase. May be correlated with chromosome condensation. Acetylated by GCN5 to form H2BK11ac and H2BK16ac. H2BK16ac can also be formed by ESA1. Acetylation of N-terminal lysines and particularly formation of H2BK11acK16ac has a positive effect on transcription. Post-translationally, sumoylation to form H2BK6su or H2BK7su, and probably also H2BK16su or H2BK17su, occurs preferentially near the telomeres and represses gene transcription.

The protein localises to the nucleus. The protein resides in the chromosome. Functionally, core component of nucleosome. Nucleosomes wrap and compact DNA into chromatin, limiting DNA accessibility to the cellular machineries which require DNA as a template. Histones thereby play a central role in transcription regulation, DNA repair, DNA replication and chromosomal stability. DNA accessibility is regulated via a complex set of post-translational modifications of histones, also called histone code, and nucleosome remodeling. The chain is Histone H2B.2 (HTB2) from Meyerozyma guilliermondii (strain ATCC 6260 / CBS 566 / DSM 6381 / JCM 1539 / NBRC 10279 / NRRL Y-324) (Yeast).